The sequence spans 398 residues: 1-deoxy-D-xylulose 5-phosphate reductoisomerase (398 aa).

NADPH contacts are provided by T11, G12, S13, I14, R38, N39, and N125. K126 is a binding site for 1-deoxy-D-xylulose 5-phosphate. E127 is a binding site for NADPH. Residue D151 coordinates Mn(2+). Residues S152, E153, S179, and H202 each coordinate 1-deoxy-D-xylulose 5-phosphate. E153 contacts Mn(2+). Residue G208 participates in NADPH binding. The 1-deoxy-D-xylulose 5-phosphate site is built by S215, N220, K221, and E224. A Mn(2+)-binding site is contributed by E224.

This sequence belongs to the DXR family. Mg(2+) serves as cofactor. The cofactor is Mn(2+).

The catalysed reaction is 2-C-methyl-D-erythritol 4-phosphate + NADP(+) = 1-deoxy-D-xylulose 5-phosphate + NADPH + H(+). The protein operates within isoprenoid biosynthesis; isopentenyl diphosphate biosynthesis via DXP pathway; isopentenyl diphosphate from 1-deoxy-D-xylulose 5-phosphate: step 1/6. Functionally, catalyzes the NADPH-dependent rearrangement and reduction of 1-deoxy-D-xylulose-5-phosphate (DXP) to 2-C-methyl-D-erythritol 4-phosphate (MEP). The polypeptide is 1-deoxy-D-xylulose 5-phosphate reductoisomerase (Burkholderia multivorans (strain ATCC 17616 / 249)).